Here is a 459-residue protein sequence, read N- to C-terminus: MNVFNDTIVSRVTSEGKSSVGIIRISGKLAFEVSIKVLNRDYLPIRTACYLSFLDLSGKIIDQGIVLWFPGPSSFTGEDVLELQGHGNPIIIDLLITTILSIPGIRLANPGEFSERAFLNGKIDLAQAESISDLINATSEQAARSAMQSLQGLFSIYINNLIKDFTKFRAKIEAQINFSDHEINADNLDVFIEHEINRIISRIKKIRNTAIQGSVLREGIKVVISGAPNSGKSSLLNALSLTNRAIVTNFPGTTRDVIYENIIINGVLFILIDTAGLRITNNPIENIGIERAWNEIKLAEHILFVIDGSRSVQNQLKNYNNFIKSLSKTSCITIVFNKSDLSKFKINSDLRNLNNGVLVSSKTGVGIEALRQHLYFSFKSSFEVNNSEGVVSARRRHINILSMVLEKFLSSKKDWKKINNIELLADDLRTCQDLLGGITGKITSDELLSEIFSEFCIGK.

Residues Arg24, Glu82, and Lys122 each coordinate (6S)-5-formyl-5,6,7,8-tetrahydrofolate. In terms of domain architecture, TrmE-type G spans 219-379 (GIKVVISGAP…LRQHLYFSFK (161 aa)). GTP contacts are provided by residues 229–234 (NSGKSS), 248–254 (TNFPGTT), and 273–276 (DTAG). Residues Ser233 and Thr254 each coordinate Mg(2+). Lys459 contacts (6S)-5-formyl-5,6,7,8-tetrahydrofolate.

It belongs to the TRAFAC class TrmE-Era-EngA-EngB-Septin-like GTPase superfamily. TrmE GTPase family. Homodimer. Heterotetramer of two MnmE and two MnmG subunits. It depends on K(+) as a cofactor.

It localises to the cytoplasm. Functionally, exhibits a very high intrinsic GTPase hydrolysis rate. Involved in the addition of a carboxymethylaminomethyl (cmnm) group at the wobble position (U34) of certain tRNAs, forming tRNA-cmnm(5)s(2)U34. The protein is tRNA modification GTPase MnmE of Buchnera aphidicola subsp. Baizongia pistaciae (strain Bp).